Reading from the N-terminus, the 337-residue chain is DNA-directed RNA polymerase subunit alpha (337 aa).

An alpha N-terminal domain (alpha-NTD) region spans residues 1-233; sequence MIQKNWQELI…DQLSIFVNFE (233 aa). The alpha C-terminal domain (alpha-CTD) stretch occupies residues 249 to 337; the sequence is FNPALLKKVD…DLAKRYEDQY (89 aa).

The protein belongs to the RNA polymerase alpha chain family. In terms of assembly, homodimer. The RNAP catalytic core consists of 2 alpha, 1 beta, 1 beta' and 1 omega subunit. When a sigma factor is associated with the core the holoenzyme is formed, which can initiate transcription.

The enzyme catalyses RNA(n) + a ribonucleoside 5'-triphosphate = RNA(n+1) + diphosphate. Functionally, DNA-dependent RNA polymerase catalyzes the transcription of DNA into RNA using the four ribonucleoside triphosphates as substrates. In Brucella ovis (strain ATCC 25840 / 63/290 / NCTC 10512), this protein is DNA-directed RNA polymerase subunit alpha.